The chain runs to 294 residues: MQKYDKMEKIGEGTYGTVFKGRNRDTMEIVALKRVRLDEDDEGVPSSALREICLLKELKHKNIVRLIDVLHSDKKLTLVFEHCDQDLKKYFDSLNGEIDMAVCRSFMLQLLRGLAFCHSHNVLHRDLKPQNLLINKNGELKLADFGLARAFGIPVKCYSAEVVTLWYRPPDVLFGAKLYTTSIDMWSAGCILAELADAGRPLFPGSDVLDQLMKIFRVLGTPNEDSWPGVSHLSDYVALPSFPAITSWSQLVPRLNSKGRDLLQKLLICRPNQRISAEAAMQHPYFTDSSSSGH.

Residues 4 to 286 enclose the Protein kinase domain; the sequence is YDKMEKIGEG…AEAAMQHPYF (283 aa). ATP contacts are provided by residues 10–18 and lysine 33; that span reads IGEGTYGTV. Threonine 14 is subject to Phosphothreonine. At tyrosine 15 the chain carries Phosphotyrosine. The active-site Proton acceptor is aspartate 126. A Phosphoserine modification is found at serine 159.

It belongs to the protein kinase superfamily. CMGC Ser/Thr protein kinase family. CDC2/CDKX subfamily. In terms of tissue distribution, abundantly expressed in all adult tissues. Lower levels found in larvae and early embryos. Barely detectable in late embryos.

It catalyses the reaction L-seryl-[protein] + ATP = O-phospho-L-seryl-[protein] + ADP + H(+). The catalysed reaction is L-threonyl-[protein] + ATP = O-phospho-L-threonyl-[protein] + ADP + H(+). Functionally, probably involved in the control of the cell cycle. Interacts with D1 and D3-type G1 cyclins. Possible regulator of neuronal differentiation and/or development. This Drosophila melanogaster (Fruit fly) protein is Cyclin-dependent kinase 5 homolog (Cdk5).